Here is an 82-residue protein sequence, read N- to C-terminus: Cell division topological specificity factor (82 aa).

It belongs to the MinE family.

Prevents the cell division inhibition by proteins MinC and MinD at internal division sites while permitting inhibition at polar sites. This ensures cell division at the proper site by restricting the formation of a division septum at the midpoint of the long axis of the cell. The sequence is that of Cell division topological specificity factor from Buchnera aphidicola subsp. Cinara cedri (strain Cc).